The sequence spans 403 residues: Adenylate cyclase (403 aa).

Residues 1 to 16 (MSTEHTNTPRADSPQS) are compositionally biased toward polar residues. Positions 1–37 (MSTEHTNTPRADSPQSAAEAVRGARQHAPAATPAESD) are disordered. The tract at residues 31 to 60 (ATPAESDPILELAEAMEGPLRIPAHTPEAV) is pyruvate binding. A Guanylate cyclase domain is found at 238-347 (AVGFADLVSY…PTVNMAARLT (110 aa)). Residues D243 and D287 each contribute to the Mg(2+) site.

Belongs to the adenylyl cyclase class-3 family. Homodimer. It depends on Mg(2+) as a cofactor.

Its subcellular location is the cytoplasm. It catalyses the reaction ATP = 3',5'-cyclic AMP + diphosphate. With respect to regulation, pyruvate-stimulated. Plays essential roles in regulation of cellular metabolism by catalyzing the synthesis of a second messenger, cAMP. In Glutamicibacter nicotianae (Arthrobacter nicotianae), this protein is Adenylate cyclase (cya).